A 352-amino-acid polypeptide reads, in one-letter code: Sphingosine 1-phosphate receptor 2 (352 aa).

Residues 1–34 (MGGLYSEYLNPEKVQEHYNYTKETLDMQETPSRK) are Extracellular-facing. N-linked (GlcNAc...) asparagine glycosylation is present at Asn-19. Residues 35–59 (VASAFIIILCCAIVVENLLVLIAVA) form a helical membrane-spanning segment. Over 60 to 66 (RNSKFHS) the chain is Cytoplasmic. Residues 67 to 95 (AMYLFLGNLAASDLLAGVAFVANTLLSGP) form a helical membrane-spanning segment. The Extracellular portion of the chain corresponds to 96–109 (VTLSLTPLQWFARE). The chain crosses the membrane as a helical span at residues 110–128 (GSAFITLSASVFSLLAIAI). The Cytoplasmic segment spans residues 129 to 147 (ERQVAIAKVKLYGSDKSCR). A helical membrane pass occupies residues 148–173 (MLMLIGASWLISLILGGLPILGWNCL). The Extracellular segment spans residues 174 to 189 (DHLEACSTVLPLYAKH). A helical transmembrane segment spans residues 190-210 (YVLCVVTIFSVILLAIVALYV). Residues 211-233 (RIYFVVRSSHADVAGPQTLALLK) lie on the Cytoplasmic side of the membrane. Residues 234–255 (TVTIVLGVFIICWLPAFSILLL) traverse the membrane as a helical segment. At 256 to 271 (DSTCPVRACPVLYKAH) the chain is on the extracellular side. The chain crosses the membrane as a helical span at residues 272–292 (YFFAFATLNSLLNPVIYTWRS). At 293 to 352 (RDLRREVLRPLLCWRQGKGATGRRGGNPGHRLLPLRSSSSLERGLHMPTSPTFLEGNTVV) the chain is on the cytoplasmic side. Residue Cys-305 is the site of S-palmitoyl cysteine attachment.

It belongs to the G-protein coupled receptor 1 family. As to expression, expressed in all developing tissues with highest levels detected in primitive, transformed cells. Relative abundance: lung &gt; kidney = skin = gut &gt; spleen &gt; brain &gt; liver.

It localises to the cell membrane. Its function is as follows. Receptor for the lysosphingolipid sphingosine 1-phosphate (S1P). S1P is a bioactive lysophospholipid that elicits diverse physiological effects on most types of cells and tissues. Receptor for the chemokine-like protein FAM19A5. Mediates the inhibitory effect of FAM19A5 on vascular smooth muscle cell proliferation and migration. In lymphoid follicles, couples the binding of S1P to the activation of GNA13 and downstream inhibition of AKT activation leading to suppression of germinal center (GC) B cell growth and migration outside the GC niche. This chain is Sphingosine 1-phosphate receptor 2 (S1pr2), found in Rattus norvegicus (Rat).